The primary structure comprises 150 residues: Large ribosomal subunit protein bL9 (150 aa).

The protein belongs to the bacterial ribosomal protein bL9 family.

In terms of biological role, binds to the 23S rRNA. In Streptococcus pyogenes serotype M3 (strain SSI-1), this protein is Large ribosomal subunit protein bL9.